A 152-amino-acid chain; its full sequence is Kininogen-1c (152 aa).

The signal sequence occupies residues Met1–Ala23. A compositionally biased stretch (basic and acidic residues) spans Val28–Lys44. A disordered region spans residues Val28–Val152.

This sequence belongs to the bradykinin-related peptide family. Expressed by the skin glands.

Its subcellular location is the secreted. Its function is as follows. Potent vasodilator. Binds B1 (BDKRB1) and B2 (BDKRB2) bradykinin receptors. This Bombina maxima (Giant fire-bellied toad) protein is Kininogen-1c.